A 578-amino-acid chain; its full sequence is Interleukin-10 receptor subunit alpha (578 aa).

The first 21 residues, 1 to 21 (MLPCLVVLLAALLSLRLGSDA), serve as a signal peptide directing secretion. The Extracellular segment spans residues 22–235 (HGTELPSPPS…LTRQYFTVTN (214 aa)). Asn-50, Asn-74, Asn-110, Asn-154, Asn-177, and Asn-189 each carry an N-linked (GlcNAc...) asparagine glycan. A disulfide bond links Cys-56 and Cys-75. A disulfide bond links Cys-202 and Cys-223. A helical membrane pass occupies residues 236-256 (VIIFFAFVLLLSGALAYCLAL). Residues 257-578 (QLYVRRRKKL…PLISSLQSSE (322 aa)) are Cytoplasmic-facing. A disordered region spans residues 313 to 436 (LHGSTDSGFG…PPEPEVPGEE (124 aa)). The span at 316-332 (STDSGFGSTKPSLQTEE) shows a compositional bias: polar residues. The short motif at 318–323 (DSGFGS) is the BTRC recognition motif element. Residues 357–371 (GDSCSSGSSNSTDSG) show a composition bias toward low complexity. The span at 377 to 396 (PSLSPSTGPTWEQQVGSNSR) shows a compositional bias: polar residues.

Belongs to the type II cytokine receptor family. As to quaternary structure, interacts with IL10. Interacts with IL10RB. Interacts (via its cytoplasmic domain) with JAK1 (via N-terminus). Interacts with BTRC; this interaction leads to IL10RA ubiquitination and subsequent degradation. Interacts with STAT3. In terms of assembly, (Microbial infection) Interacts with human cytomegalovirus protein IL10. (Microbial infection) Interacts with Epstein-Barr virus protein IL10. Post-translationally, phosphorylated. Phosphorylation of the cytoplasmic tail induced STAT3 activation. In terms of processing, ubiquitinated by BTRC; ubiquitination leads to endocytosis and subsequent degradation of IL10RA. As to expression, primarily expressed in hematopoetic cells including B-cells, T-cells, NK cells, monocytes and macrophages. Not expressed in non-hematopoetic cells such as fibroblasts or endothelial cells.

The protein resides in the cell membrane. Its subcellular location is the cytoplasm. Cell surface receptor for the cytokine IL10 that participates in IL10-mediated anti-inflammatory functions, limiting excessive tissue disruption caused by inflammation. Upon binding to IL10, induces a conformational change in IL10RB, allowing IL10RB to bind IL10 as well. In turn, the heterotetrameric assembly complex, composed of two subunits of IL10RA and IL10RB, activates the kinases JAK1 and TYK2 that are constitutively associated with IL10RA and IL10RB respectively. These kinases then phosphorylate specific tyrosine residues in the intracellular domain in IL10RA leading to the recruitment and subsequent phosphorylation of STAT3. Once phosphorylated, STAT3 homodimerizes, translocates to the nucleus and activates the expression of anti-inflammatory genes. In addition, IL10RA-mediated activation of STAT3 inhibits starvation-induced autophagy. This Homo sapiens (Human) protein is Interleukin-10 receptor subunit alpha (IL10RA).